The sequence spans 410 residues: Multifunctional CCA protein (410 aa).

Glycine 8 and arginine 11 together coordinate ATP. 2 residues coordinate CTP: glycine 8 and arginine 11. Mg(2+)-binding residues include aspartate 21 and aspartate 23. Residues arginine 91, arginine 138, and arginine 141 each contribute to the ATP site. 3 residues coordinate CTP: arginine 91, arginine 138, and arginine 141. Residues threonine 229–aspartate 347 form the HD domain.

It belongs to the tRNA nucleotidyltransferase/poly(A) polymerase family. Bacterial CCA-adding enzyme type 1 subfamily. As to quaternary structure, monomer. Can also form homodimers and oligomers. Mg(2+) is required as a cofactor. It depends on Ni(2+) as a cofactor.

It carries out the reaction a tRNA precursor + 2 CTP + ATP = a tRNA with a 3' CCA end + 3 diphosphate. The catalysed reaction is a tRNA with a 3' CCA end + 2 CTP + ATP = a tRNA with a 3' CCACCA end + 3 diphosphate. In terms of biological role, catalyzes the addition and repair of the essential 3'-terminal CCA sequence in tRNAs without using a nucleic acid template. Adds these three nucleotides in the order of C, C, and A to the tRNA nucleotide-73, using CTP and ATP as substrates and producing inorganic pyrophosphate. tRNA 3'-terminal CCA addition is required both for tRNA processing and repair. Also involved in tRNA surveillance by mediating tandem CCA addition to generate a CCACCA at the 3' terminus of unstable tRNAs. While stable tRNAs receive only 3'-terminal CCA, unstable tRNAs are marked with CCACCA and rapidly degraded. In Xanthomonas oryzae pv. oryzae (strain MAFF 311018), this protein is Multifunctional CCA protein.